Consider the following 227-residue polypeptide: Zinc finger protein ZAT10 (227 aa).

The segment at 80-102 (YKCSVCDKTFSSYQALGGHKASH) adopts a C2H2-type 1 zinc-finger fold. Residues 96-128 (GGHKASHRKNLSQTLSGGGDDHSTSSATTTSAV) are disordered. Residues 119-128 (TSSATTTSAV) show a composition bias toward low complexity. Residues 136-158 (HVCTICNKSFPSGQALGGHKRCH) form a C2H2-type 2 zinc finger. Positions 168-189 (SSVSNSEGAGSTSHVSSSHRGF) are disordered. Polar residues predominate over residues 174–186 (EGAGSTSHVSSSH).

Expressed in roots, stems and leaves.

It localises to the nucleus. Functionally, transcriptional repressor involved in abiotic stress responses. Can repress the stress responsive genes DREB1A and LTI78. Probably involved in jasmonate (JA) early signaling response. May regulate the expression of the JA biosynthesis gene LOX3 and control the expression of TIFY10A/JAZ1, a key repressor in the JA signaling cascade. This chain is Zinc finger protein ZAT10 (ZAT10), found in Arabidopsis thaliana (Mouse-ear cress).